A 118-amino-acid polypeptide reads, in one-letter code: Class II hydrophobin CRP (118 aa).

Positions 1–22 are cleaved as a signal peptide; it reads MQFSIIAISFLASLAMASPAKR. The segment at 20-46 is disordered; that stretch reads AKRGGGGGGSGSGSGSGSGSGSGGGST. Gly residues predominate over residues 22 to 45; it reads RGGGGGGSGSGSGSGSGSGSGGGS. 7 repeat units span residues 29 to 30, 31 to 32, 33 to 34, 35 to 36, 37 to 38, 39 to 40, and 41 to 42. The 7 X 2 AA tandem repeats of S-G stretch occupies residues 29-42; sequence SGSGSGSGSGSGSG. Cystine bridges form between cysteine 51/cysteine 100, cysteine 61/cysteine 91, cysteine 62/cysteine 74, and cysteine 101/cysteine 112.

It belongs to the cerato-ulmin hydrophobin family. In terms of assembly, homotetramer. Further self-assembles to form highly ordered films at water-air interfaces through intermolecular interactions.

The protein localises to the secreted. The protein resides in the cell wall. In terms of biological role, aerial growth, conidiation, and dispersal of filamentous fungi in the environment rely upon a capability of their secreting small amphipathic proteins called hydrophobins (HPBs) with low sequence identity. Class I can self-assemble into an outermost layer of rodlet bundles on aerial cell surfaces, conferring cellular hydrophobicity that supports fungal growth, development and dispersal; whereas Class II form highly ordered films at water-air interfaces through intermolecular interactions but contribute nothing to the rodlet structure. Cryparin is a class II hydrophobin that is the most abundant protein produced by this fungus when grown in liquid culture and that plays an essential role in the fitness of this important plant pathogen by facilitating the eruption of the fungal fruiting bodies through the bark of its host tree. The chain is Class II hydrophobin CRP from Cryphonectria parasitica (Chestnut blight fungus).